Consider the following 282-residue polypeptide: Pantothenate synthetase (282 aa).

30 to 37 lines the ATP pocket; sequence MGFLHDGH. His37 acts as the Proton donor in catalysis. Gln60 is a (R)-pantoate binding site. Gln60 contributes to the beta-alanine binding site. Residue 146–149 participates in ATP binding; sequence GQKD. Gln152 contributes to the (R)-pantoate binding site. Residues Ile175 and 183–186 each bind ATP; that span reads KSSR.

It belongs to the pantothenate synthetase family. Homodimer.

It is found in the cytoplasm. The catalysed reaction is (R)-pantoate + beta-alanine + ATP = (R)-pantothenate + AMP + diphosphate + H(+). It participates in cofactor biosynthesis; (R)-pantothenate biosynthesis; (R)-pantothenate from (R)-pantoate and beta-alanine: step 1/1. Its function is as follows. Catalyzes the condensation of pantoate with beta-alanine in an ATP-dependent reaction via a pantoyl-adenylate intermediate. The polypeptide is Pantothenate synthetase (Campylobacter jejuni subsp. jejuni serotype O:6 (strain 81116 / NCTC 11828)).